A 202-amino-acid chain; its full sequence is Mitochondrial import receptor subunit TOM20-3 (202 aa).

Position 1 is an N-acetylmethionine (M1). Residues 1-174 (MDTETEFDRI…NKKSSDAKYD (174 aa)) lie on the Cytoplasmic side of the membrane. 2 TPR repeats span residues 38-74 (GGVL…DPKK) and 86-119 (TSFA…QPDN). The tract at residues 146–166 (SQPMGRVEAPAPPSSKAVKNK) is disordered. A helical membrane pass occupies residues 175–192 (AMGWVILAIGVVAWISFA). Residues 193 to 202 (KANVPVSPPR) lie on the Mitochondrial intermembrane side of the membrane.

Belongs to the Tom20 family. As to quaternary structure, forms part of the preprotein translocase complex of the outer mitochondrial membrane (TOM complex) which consists of at least 6 different proteins (TOM5, TOM6, TOM7, TOM20, TOM22/TOM9 and TOM40). Component of a mitochondrial large protein complex that contains, at least, MIC60, DGS1, TOM40, TOM20 proteins, and petC/RISP. In terms of processing, the N-terminus is blocked. In terms of tissue distribution, expressed in roots, flowers, young cotyledons and leaves.

Its subcellular location is the mitochondrion outer membrane. In terms of biological role, central component of the receptor complex responsible for the recognition and translocation of cytosolically synthesized mitochondrial preproteins. Together with TOM22 functions as the transit peptide receptor at the surface of the mitochondrion outer membrane and facilitates the movement of preproteins into the translocation pore. This chain is Mitochondrial import receptor subunit TOM20-3, found in Arabidopsis thaliana (Mouse-ear cress).